The following is a 106-amino-acid chain: NADH dehydrogenase [ubiquinone] 1 alpha subcomplex subunit 8-B (106 aa).

Residue Ser-2 is modified to N-acetylserine. CHCH domains lie at 26–67 (GMRC…LKDL) and 68–106 (HQKC…CPLK). 3 short sequence motifs (cx9C motif) span residues 29–39 (CMPENVAFLKC), 49–59 (CLDKGRDVTRC), and 71–81 (CQKEMDDYVGC). 4 cysteine pairs are disulfide-bonded: Cys-29/Cys-59, Cys-39/Cys-49, Cys-71/Cys-103, and Cys-81/Cys-92. The Cx10C motif signature appears at 92–103 (CRKEQEAFEKVC).

The protein belongs to the complex I NDUFA8 subunit family. In terms of assembly, complex I is composed of at least 49 different subunits.

The protein resides in the mitochondrion. The protein localises to the mitochondrion intermembrane space. In terms of biological role, accessory subunit of the mitochondrial membrane respiratory chain NADH dehydrogenase (Complex I), that is believed not to be involved in catalysis. Complex I functions in the transfer of electrons from NADH to the respiratory chain. The immediate electron acceptor for the enzyme is believed to be ubiquinone. The sequence is that of NADH dehydrogenase [ubiquinone] 1 alpha subcomplex subunit 8-B from Arabidopsis thaliana (Mouse-ear cress).